The chain runs to 34 residues: KALYAPFDATFPNQNQTRNKAVDTAPCEWYRRVY.

The protein belongs to the cytochrome c oxidase subunit 6B family. In terms of assembly, component of the cytochrome c oxidase (complex IV, CIV), a multisubunit enzyme composed of 14 subunits. The complex is composed of a catalytic core of 3 subunits MT-CO1, MT-CO2 and MT-CO3, encoded in the mitochondrial DNA, and 11 supernumerary subunits COX4I, COX5A, COX5B, COX6A, COX6B, COX6C, COX7A, COX7B, COX7C, COX8 and NDUFA4, which are encoded in the nuclear genome. The complex exists as a monomer or a dimer and forms supercomplexes (SCs) in the inner mitochondrial membrane with NADH-ubiquinone oxidoreductase (complex I, CI) and ubiquinol-cytochrome c oxidoreductase (cytochrome b-c1 complex, complex III, CIII), resulting in different assemblies (supercomplex SCI(1)III(2)IV(1) and megacomplex MCI(2)III(2)IV(2)). The N-terminus is blocked.

The protein resides in the mitochondrion inner membrane. It participates in energy metabolism; oxidative phosphorylation. Component of the cytochrome c oxidase, the last enzyme in the mitochondrial electron transport chain which drives oxidative phosphorylation. The respiratory chain contains 3 multisubunit complexes succinate dehydrogenase (complex II, CII), ubiquinol-cytochrome c oxidoreductase (cytochrome b-c1 complex, complex III, CIII) and cytochrome c oxidase (complex IV, CIV), that cooperate to transfer electrons derived from NADH and succinate to molecular oxygen, creating an electrochemical gradient over the inner membrane that drives transmembrane transport and the ATP synthase. Cytochrome c oxidase is the component of the respiratory chain that catalyzes the reduction of oxygen to water. Electrons originating from reduced cytochrome c in the intermembrane space (IMS) are transferred via the dinuclear copper A center (CU(A)) of subunit 2 and heme A of subunit 1 to the active site in subunit 1, a binuclear center (BNC) formed by heme A3 and copper B (CU(B)). The BNC reduces molecular oxygen to 2 water molecules using 4 electrons from cytochrome c in the IMS and 4 protons from the mitochondrial matrix. This chain is Cytochrome c oxidase subunit 6B, found in Thunnus obesus (Bigeye tuna).